The following is a 303-amino-acid chain: Serine/threonine-protein phosphatase PP-X homolog 2 (303 aa).

Mn(2+)-binding residues include aspartate 51, histidine 53, aspartate 79, and asparagine 111. The active-site Proton donor is histidine 112. Positions 161 and 235 each coordinate Mn(2+).

This sequence belongs to the PPP phosphatase family. PP-4 (PP-X) subfamily. Mn(2+) serves as cofactor.

The catalysed reaction is O-phospho-L-seryl-[protein] + H2O = L-seryl-[protein] + phosphate. It catalyses the reaction O-phospho-L-threonyl-[protein] + H2O = L-threonyl-[protein] + phosphate. This is Serine/threonine-protein phosphatase PP-X homolog 2 (Ppx2) from Paramecium tetraurelia.